We begin with the raw amino-acid sequence, 84 residues long: Agaphelin (84 aa).

The first 26 residues, 1–26, serve as a signal peptide directing secretion; sequence MKMRVHLLAVSVLLVVLALQTTPAEA. The Kazal-like domain maps to 29–82; that stretch reads NSEMATCACQLIYRPVCASNNESYSNECVLKCASETPTGRSIGLHKVKDGNCNG. 3 cysteine pairs are disulfide-bonded: C35–C60, C37–C56, and C45–C80. N49 is a glycosylation site (N-linked (GlcNAc...) asparagine).

As to quaternary structure, interacts with human ELANE.

It localises to the secreted. In terms of biological role, functions as a slow and tight inhibitor of host neutrophil elastase (ELANE). Inhibits host proteinase 3 (PRTN3) and chymotrypsin. Does not inhibit other host proteases involved in coagulation or inflammation, such as cathepsin G (CTSG), trypsin, chymase, matriptase, beta-tryptase, kallikrein, urokinase-type plasminogen activator (PLAU), coagulation factors Xa (F10), XIa (F11), XIIa (F12), plasmin (PLG), thrombin (F2) and tissue-type plasminogen activator (PLAT). Inhibits host neutrophil chemotaxis induced by N-formylmethionine-leucyl-phenylalanine (fMLP) in vitro. Inhibits ELANE-mediated potentiation of platelet aggregation induced by CTSG in the host. Does not affect CTSG- or collagen-induced platelet aggregation. Blocks cleavage of tissue factor pathway inhibitor (TFPI) by ELANE in the host. Inhibits neutrophil-induced coagulation in the host by interfering with neutrophil extracellular traps (NET) formation. Exhibits anti-inflammatory activity. Reduces ischemia-induced activation of MAPK and NF-kappa-B pathways in the host. Decreases CCL2 and IL8 production in IL4- or lipopolysaccharide (LPS)-stimulated host epithelial cells. Reduces caspase-3 (CASP3)-dependent apoptosis in damaged host tissues. The chain is Agaphelin from Anopheles gambiae (African malaria mosquito).